A 650-amino-acid polypeptide reads, in one-letter code: MMGIGKNTTSKSMEAGSSTEGKYEDEAKHPAFFTLPVVINGGATSSGEQDNEDTELMAIYTTENGIAEKSSLAETLDSTGSLDPQRSDMIYTIEDVPPWYLCIFLGLQHYLTCFSGTIAVPFLLADAMCVGYDQWATSQLIGTIFFCVGITTLLQTTFGCRLPLFQASAFAFLAPARAILSLDKWKCNTTDVSVANGTAELLHTEHIWYPRIREIQGAIIMSSLIEVVIGLLGLPGALLKYIGPLTITPTVALIGLSGFQAAGERAGKHWGIAMLTIFLVLLFSQYARNVKFPLPIYKSKKGWTAYKLQLFKMFPIILAILVSWLLCFIFTVTDVFPPDSTKYGFYARTDARQGVLLVAPWFKVPYPFQWGLPTVSAAGVIGMLSAVVASIIESIGDYYACARLSCAPPPPIHAINRGIFVEGLSCVLDGIFGTGNGSTSSSPNIGVLGITKVGSRRVIQCGAALMLALGMIGKFSALFASLPDPVLGALFCTLFGMITAVGLSNLQFIDLNSSRNLFVLGFSIFFGLVLPSYLRQNPLVTGITGIDQVLNVLLTTAMFVGGCVAFILDNTIPGTPEERGIRKWKKGVGKGNKSLDGMESYNLPFGMNIIKKYRCFSYLPISPTFVGYTWKGLRKSDNSRSSDEDSQATG.

The segment covering 1–20 (MMGIGKNTTSKSMEAGSSTE) has biased composition (polar residues). The tract at residues 1-21 (MMGIGKNTTSKSMEAGSSTEG) is disordered. The Cytoplasmic portion of the chain corresponds to 9–110 (TSKSMEAGSS…LCIFLGLQHY (102 aa)). At serine 70 the chain carries Phosphoserine. Residue threonine 75 is modified to Phosphothreonine. Serine 78 is modified (phosphoserine). Residue threonine 79 is modified to Phosphothreonine. Residue serine 81 is modified to Phosphoserine. A helical transmembrane segment spans residues 111–131 (LTCFSGTIAVPFLLADAMCVG). Residues 132–139 (YDQWATSQ) lie on the Extracellular side of the membrane. The chain crosses the membrane as a helical span at residues 140–160 (LIGTIFFCVGITTLLQTTFGC). A topological domain (cytoplasmic) is located at residue arginine 161. A helical transmembrane segment spans residues 162–182 (LPLFQASAFAFLAPARAILSL). The Extracellular segment spans residues 183–218 (DKWKCNTTDVSVANGTAELLHTEHIWYPRIREIQGA). Asparagine 188 and asparagine 196 each carry an N-linked (GlcNAc...) asparagine glycan. A helical transmembrane segment spans residues 219-239 (IIMSSLIEVVIGLLGLPGALL). Residues 240-266 (KYIGPLTITPTVALIGLSGFQAAGERA) are Cytoplasmic-facing. Residues 267–284 (GKHWGIAMLTIFLVLLFS) form a helical membrane-spanning segment. Topologically, residues 285–288 (QYAR) are extracellular. The helical intramembrane region spans 289–302 (NVKFPLPIYKSKKG). Residues 303-309 (WTAYKLQ) lie on the Extracellular side of the membrane. The helical transmembrane segment at 310-330 (LFKMFPIILAILVSWLLCFIF) threads the bilayer. The Cytoplasmic segment spans residues 331-371 (TVTDVFPPDSTKYGFYARTDARQGVLLVAPWFKVPYPFQWG). The helical transmembrane segment at 372-392 (LPTVSAAGVIGMLSAVVASII) threads the bilayer. At 393–417 (ESIGDYYACARLSCAPPPPIHAINR) the chain is on the extracellular side. The chain crosses the membrane as a helical span at residues 418–438 (GIFVEGLSCVLDGIFGTGNGS). Residues 439 to 461 (TSSSPNIGVLGITKVGSRRVIQC) are Cytoplasmic-facing. The helical transmembrane segment at 462–482 (GAALMLALGMIGKFSALFASL) threads the bilayer. Topologically, residues 483–485 (PDP) are extracellular. A helical transmembrane segment spans residues 486–506 (VLGALFCTLFGMITAVGLSNL). At 507–516 (QFIDLNSSRN) the chain is on the cytoplasmic side. Residues 517 to 537 (LFVLGFSIFFGLVLPSYLRQN) traverse the membrane as a helical segment. At 538-547 (PLVTGITGID) the chain is on the extracellular side. Residues 548 to 568 (QVLNVLLTTAMFVGGCVAFIL) traverse the membrane as a helical segment. Topologically, residues 569–650 (DNTIPGTPEE…SSDEDSQATG (82 aa)) are cytoplasmic. Residue threonine 649 is modified to Phosphothreonine.

Belongs to the nucleobase:cation symporter-2 (NCS2) (TC 2.A.40) family. In terms of assembly, interacts with CLSTN3. In terms of processing, phosphorylated. As to expression, ubiquitous.

Its subcellular location is the cell membrane. The catalysed reaction is L-ascorbate(out) + 2 Na(+)(out) = L-ascorbate(in) + 2 Na(+)(in). In terms of biological role, sodium/ascorbate cotransporter. Mediates electrogenic uptake of vitamin C, with a stoichiometry of 2 Na(+) for each ascorbate. The polypeptide is Solute carrier family 23 member 2 (SLC23A2) (Homo sapiens (Human)).